Here is a 376-residue protein sequence, read N- to C-terminus: Zinc-regulated transporter 1 (376 aa).

Over 1–50 (MSNVTTPWWKQWDPSEVTLADKTPDDVWKTCVLQGVYFGGNEYNGNLGAR) the chain is Extracellular. Residues 51–71 (ISSVFVILFVSTFFTMFPLIS) traverse the membrane as a helical segment. Residues 72–80 (TKVKRLRIP) lie on the Cytoplasmic side of the membrane. The helical transmembrane segment at 81–101 (LYVYLFAKYFGSGVIVATAFI) threads the bilayer. Residues 102-122 (HLMDPAYGAIGGTTCVGQTGN) are Extracellular-facing. The helical transmembrane segment at 123 to 143 (WGLYSWCPAIMLTSLTFTFLT) threads the bilayer. Over 144–216 (DLFSSVWVER…TSMDVVQSFQ (73 aa)) the chain is Cytoplasmic. Residues 177–191 (VSSENDNENGTANGS) are compositionally biased toward polar residues. Residues 177–196 (VSSENDNENGTANGSHDTKN) form a disordered region. Residues 217–237 (AQFYAFLILEFGVIFHSVMIG) form a helical membrane-spanning segment. Topologically, residues 238 to 242 (LNLGS) are extracellular. Residues 243–263 (VGDEFSSLYPVLVFHQSFEGL) traverse the membrane as a helical segment. At 264 to 278 (GIGARLSAIEFPRSK) the chain is on the cytoplasmic side. The helical transmembrane segment at 279–299 (RWWPWALCVAYGLTTPICVAI) threads the bilayer. Residues 300–310 (GLGVRTRYVSG) are Extracellular-facing. A helical transmembrane segment spans residues 311–331 (SYTALVISGVLDAISAGILLY). At 332–354 (TGLVELLARDFIFNPQRTKDLRE) the chain is on the cytoplasmic side. The helical transmembrane segment at 355–375 (LSFNVICTLFGAGIMALIGKW) threads the bilayer. Alanine 376 is a topological domain (extracellular).

This sequence belongs to the ZIP transporter (TC 2.A.5) family.

The protein resides in the membrane. Functionally, high-affinity zinc transport protein. In Saccharomyces cerevisiae (strain ATCC 204508 / S288c) (Baker's yeast), this protein is Zinc-regulated transporter 1 (ZRT1).